The sequence spans 267 residues: Coiled-coil domain-containing protein 172 (267 aa).

Coiled-coil stretches lie at residues 24–97 and 128–191; these read MREV…CEAI and LMKE…EETE.

The protein belongs to the CCDC172 family. In terms of assembly, may interact with TEKT2.

It localises to the cytoplasm. The protein resides in the cell projection. The protein localises to the cilium. The polypeptide is Coiled-coil domain-containing protein 172 (Ccdc172) (Mus musculus (Mouse)).